Consider the following 241-residue polypeptide: Ashwin (241 aa).

Disordered regions lie at residues 1–21 (MAAQGRGRVGGGKEERVSARS), 82–102 (KMMEKKRKQNEPKSENKSVTA), and 212–241 (KRSVPKDESDLPNDLKPTEAKKKIQHCTWP). A compositionally biased stretch (basic and acidic residues) spans 11-21 (GGKEERVSARS).

The protein belongs to the ashwin family.

It localises to the nucleus. This Gallus gallus (Chicken) protein is Ashwin.